The following is a 252-amino-acid chain: Protein TRANSPARENT TESTA 16 (252 aa).

The 61-residue stretch at 1–61 folds into the MADS-box domain; it reads MGRGKIEIKK…GKLSEFCSEQ (61 aa). Positions 86-176 constitute a K-box domain; the sequence is QEQLHHEMEL…YRWLHEHRAA (91 aa). Residues 121-174 adopt a coiled-coil conformation; the sequence is NELDGLERQLEHSVLKVRERKNELMQQQLENLSRKRRMLEEDNNNMYRWLHEHR.

In terms of assembly, interacts with AP1/AGL7, SEP1/AGL2, SEP2/AGL4, SEP3/AGL9 and AGL3/SEP4. As to expression, expressed in buds, flowers and immature seeds, but not in roots, stems, leaves, seedlings or siliques valves. Expression in seed coat is confined to the endothelium layer.

Its subcellular location is the nucleus. Functionally, transcription factor involved in the developmental regulation of the endothelium and in the accumulation of proanthocyanidins (PAs) or condensed tannins which give the seed its brown pigmentation after oxidation. Necessary for the normal activation of the BANYULS promoter in the endothelium body. Is required, together with AGL11/STK for the maternal control of endothelium formation, which is essential for female gametophyte development and fertilization, and seed formation. Interacts genetically with AGL1/SHP1 and AGL5/SHP2 in a partially antagonistic manner and represses AGL1/SHP1, AGL5/SHP2, and AGL8/FUL during flower development. Is essential for the coordination of cell divisions in ovule, seed coat development and endosperm formation. Mediates the crosstalk between endothelium and nucellus to ensure proper seed formation. Functions redundantly with AGL63/GOA to repress nucellus growth and promote its degeneration. Represses the negative regulator of autophagy and programmed cell death HVA22D in the proximal nucellus. Binds specifically to the CArG box DNA sequence 5'-CC (A/T)6 GG-3'. This Arabidopsis thaliana (Mouse-ear cress) protein is Protein TRANSPARENT TESTA 16 (TT16).